Here is a 238-residue protein sequence, read N- to C-terminus: Inactive glycoside hydrolase XLP1 (238 aa).

A signal peptide spans 1–19 (MKSFLIAIVIAVLLPVSAA). Residue E133 is part of the active site. Residues N171 and N187 are each glycosylated (N-linked (GlcNAc...) asparagine). The active site involves E219.

This sequence belongs to the glycosyl hydrolase 12 (cellulase H) family. As to quaternary structure, interacts with host apoplastic glucanase inhibitor GIP2.

The protein resides in the secreted. Functionally, non-functional secreted XEG1-like protein that binds to host Nicotiana benthamiana apoplastic glucanase inhibitor protein GIP2 more tightly than does XEG1, thus it outcompetes XEG1 for GIP2 binding and frees functional XEG1 to support P.parasitica infection. With XEG1, is required to elevate apoplastic sugar during P.parasitica infection. The polypeptide is Inactive glycoside hydrolase XLP1 (Phytophthora nicotianae (strain INRA-310) (Phytophthora parasitica)).